A 193-amino-acid polypeptide reads, in one-letter code: MEIVFVSENENKIAEAREILLPLGFQSIFCGVTCRETGLTFTENAVLKAQAAVGSVKDVPIMADDSGICVDALNGMPGVLSSRWSQDGRNIDLLLWQMRDVPDVHRTAHFVCSIACVMPNTEVRTVSSVWHGRILHAPDGTGGFGYDPVFLPDGYSVSAAGLGSDLKNRISHRYKALRLMSSLLKRTYFSCHA.

Position 7–12 (7–12 (SENENK)) interacts with substrate. Asp-65 (proton acceptor) is an active-site residue. Position 65 (Asp-65) interacts with Mg(2+). Substrate contacts are provided by residues Ser-66, 144–147 (FGYD), Lys-167, and 172–173 (HR).

It belongs to the HAM1 NTPase family. As to quaternary structure, homodimer. Mg(2+) is required as a cofactor.

It catalyses the reaction XTP + H2O = XMP + diphosphate + H(+). The enzyme catalyses dITP + H2O = dIMP + diphosphate + H(+). The catalysed reaction is ITP + H2O = IMP + diphosphate + H(+). Functionally, pyrophosphatase that catalyzes the hydrolysis of nucleoside triphosphates to their monophosphate derivatives, with a high preference for the non-canonical purine nucleotides XTP (xanthosine triphosphate), dITP (deoxyinosine triphosphate) and ITP. Seems to function as a house-cleaning enzyme that removes non-canonical purine nucleotides from the nucleotide pool, thus preventing their incorporation into DNA/RNA and avoiding chromosomal lesions. This is dITP/XTP pyrophosphatase from Tropheryma whipplei (strain Twist) (Whipple's bacillus).